The primary structure comprises 808 residues: uncharacterized protein (808 aa).

35–42 provides a ligand contact to ATP; the sequence is GPNNVGKT.

This is an uncharacterized protein from Methanocaldococcus jannaschii (strain ATCC 43067 / DSM 2661 / JAL-1 / JCM 10045 / NBRC 100440) (Methanococcus jannaschii).